Reading from the N-terminus, the 165-residue chain is U11/U12 small nuclear ribonucleoprotein 25 kDa protein (165 aa).

One can recognise a Ubiquitin-like domain in the interval 52-137; sequence MRLSVVKLDG…IRNNSQVTFM (86 aa). The segment at 145-165 is disordered; that stretch reads RGRHSKRKKHRLFRSLHKTSS.

Component of the U11/U12 snRNPs that are part of the U12-type spliceosome.

It localises to the nucleus. This chain is U11/U12 small nuclear ribonucleoprotein 25 kDa protein (SNRNP25), found in Arabidopsis thaliana (Mouse-ear cress).